Consider the following 127-residue polypeptide: Large ribosomal subunit protein uL22 (127 aa).

The span at 106 to 117 (GAPEGVPVGGAV) shows a compositional bias: low complexity. Positions 106 to 127 (GAPEGVPVGGAVDTPGDEEEEE) are disordered.

The protein belongs to the universal ribosomal protein uL22 family. In terms of assembly, part of the 50S ribosomal subunit.

Its function is as follows. This protein binds specifically to 23S rRNA; its binding is stimulated by other ribosomal proteins, e.g. L4, L17, and L20. It is important during the early stages of 50S assembly. It makes multiple contacts with different domains of the 23S rRNA in the assembled 50S subunit and ribosome. In terms of biological role, the globular domain of the protein is located near the polypeptide exit tunnel on the outside of the subunit, while an extended beta-hairpin is found that lines the wall of the exit tunnel in the center of the 70S ribosome. This is Large ribosomal subunit protein uL22 from Rubrobacter xylanophilus (strain DSM 9941 / JCM 11954 / NBRC 16129 / PRD-1).